We begin with the raw amino-acid sequence, 204 residues long: MSAVRSKICGITRIEDALAAVEAGADAIGFVFYAKSPRAVTVQQARSIIAALPPFVTTVGLFVNASRCELGEILDAVPLDLLQFHGDETAAECEGWHRPYIKALRVKAGDNIAAACDAYPSASGVLLDTYVEGVPGGTGEAFDWSLIPQGLSKPLILAGGLTPENVADAIARVRPYAVDVSGGVEASKGIKDHAKIRAFINAVR.

This sequence belongs to the TrpF family.

The catalysed reaction is N-(5-phospho-beta-D-ribosyl)anthranilate = 1-(2-carboxyphenylamino)-1-deoxy-D-ribulose 5-phosphate. It participates in amino-acid biosynthesis; L-tryptophan biosynthesis; L-tryptophan from chorismate: step 3/5. The sequence is that of N-(5'-phosphoribosyl)anthranilate isomerase from Pseudomonas fluorescens (strain Pf0-1).